The following is a 110-amino-acid chain: MRFLVLTGLSGAGKTTARGFLEDLGYFMVDNLPPRLWPPLLQEAAARGLARVGVVVDARALAFFQDLEEVLEALRPTVVYLEARPEVLLRRYNLTRRVHPLGAGNLMREI.

Position 8–15 (8–15) interacts with ATP; sequence GLSGAGKT. 57 to 60 contributes to the GTP binding site; that stretch reads DARA.

This sequence belongs to the RapZ-like family.

Displays ATPase and GTPase activities. This Thermus thermophilus protein is Nucleotide-binding protein in fmt 3'region.